The following is a 310-amino-acid chain: Malate dehydrogenase (310 aa).

NAD(+) is bound by residues 7 to 12 (GAGNVG) and Asp-32. The substrate site is built by Arg-81 and Arg-87. NAD(+) is bound by residues Asn-94 and 117–119 (VSN). Residues Asn-119 and Arg-150 each contribute to the substrate site. Residue His-174 is the Proton acceptor of the active site.

Belongs to the LDH/MDH superfamily. MDH type 3 family. In terms of assembly, homotetramer; arranged as a dimer of dimers.

It carries out the reaction (S)-malate + NAD(+) = oxaloacetate + NADH + H(+). Catalyzes the reversible oxidation of malate to oxaloacetate. This is Malate dehydrogenase from Prosthecochloris vibrioformis (Chlorobium vibrioforme).